Reading from the N-terminus, the 403-residue chain is Dynactin subunit 2 (403 aa).

The interval 1-26 is disordered; the sequence is MADPKYADLPGIARNEPDVYETSDLP. N-acetylalanine is present on Ala-2. Tyr-6 bears the Phosphotyrosine mark. Position 83 is a phosphoserine (Ser-83). Phosphotyrosine is present on Tyr-86. Residues 100–130 adopt a coiled-coil conformation; sequence QQKYQRLLHEVQELTTEVEKIKTTVKESATE. A phosphothreonine mark is found at Thr-134 and Thr-200. The segment at 184-204 is disordered; that stretch reads TKNSKGTGSGGKTTSGTPPDS. Positions 216–248 form a coiled coil; sequence EQDKFSQAAKVAELEKRLTELEATVRCDQDAQN. Position 322 is a phosphoserine (Ser-322).

This sequence belongs to the dynactin subunit 2 family. In terms of assembly, subunit of dynactin, a multiprotein complex part of a tripartite complex with dynein and a adapter, such as BICDL1, BICD2 or HOOK3. The dynactin complex is built around ACTR1A/ACTB filament and consists of an actin-related filament composed of a shoulder domain, a pointed end and a barbed end. Its length is defined by its flexible shoulder domain. The soulder is composed of 2 DCTN1 subunits, 4 DCTN2 and 2 DCTN3. The 4 DCNT2 (via N-terminus) bind the ACTR1A filament and act as molecular rulers to determine the length. The pointed end is important for binding dynein-dynactin cargo adapters and consists of 4 subunits: ACTR10, DCNT4, DCTN5 and DCTN6. The barbed end is composed of a CAPZA1:CAPZB heterodimers, which binds ACTR1A/ACTB filament and dynactin and stabilizes dynactin. Interacts with BICD2 and CEP135. Interacts with DYNAP. Interacts with ECPAS. Interacts with MAPRE1.

Its subcellular location is the cytoplasm. The protein resides in the cytoskeleton. It is found in the microtubule organizing center. It localises to the centrosome. The protein localises to the membrane. Part of the dynactin complex that activates the molecular motor dynein for ultra-processive transport along microtubules. In the dynactin soulder domain, binds the ACTR1A filament and acts as a molecular ruler to determine the length. Modulates cytoplasmic dynein binding to an organelle, and plays a role in prometaphase chromosome alignment and spindle organization during mitosis. Involved in anchoring microtubules to centrosomes. May play a role in synapse formation during brain development. The chain is Dynactin subunit 2 (DCTN2) from Bos taurus (Bovine).